Here is a 682-residue protein sequence, read N- to C-terminus: Heat shock 70 kDa protein, mitochondrial (682 aa).

The N-terminal 57 residues, Met-1–Asn-57, are a transit peptide targeting the mitochondrion. The disordered stretch occupies residues Gly-649 to Lys-682. Positions Gly-655–Gly-668 are enriched in gly residues. Acidic residues predominate over residues Pro-673 to Lys-682.

The protein belongs to the heat shock protein 70 family.

The protein localises to the mitochondrion. In Solanum tuberosum (Potato), this protein is Heat shock 70 kDa protein, mitochondrial (HSP68).